Reading from the N-terminus, the 145-residue chain is uncharacterized protein (145 aa).

Residues 1–59 (MSTGTPHYAADRSKSRKSNNNRSIPFRTPTTQKVVKTSIRLGPVNPPTPTRNTQGGHGF) form a disordered region.

This is an uncharacterized protein from Caenorhabditis elegans.